A 203-amino-acid polypeptide reads, in one-letter code: Outer-membrane lipoprotein carrier protein (203 aa).

The first 20 residues, 1 to 20 (MKKWLAISCLIAGMTSTAVY), serve as a signal peptide directing secretion.

It belongs to the LolA family. Monomer.

The protein localises to the periplasm. In terms of biological role, participates in the translocation of lipoproteins from the inner membrane to the outer membrane. Only forms a complex with a lipoprotein if the residue after the N-terminal Cys is not an aspartate (The Asp acts as a targeting signal to indicate that the lipoprotein should stay in the inner membrane). The polypeptide is Outer-membrane lipoprotein carrier protein (Pectobacterium carotovorum subsp. carotovorum (strain PC1)).